Reading from the N-terminus, the 121-residue chain is Large ribosomal subunit protein uL18 (121 aa).

This sequence belongs to the universal ribosomal protein uL18 family. As to quaternary structure, part of the 50S ribosomal subunit; part of the 5S rRNA/L5/L18/L25 subcomplex. Contacts the 5S and 23S rRNAs.

This is one of the proteins that bind and probably mediate the attachment of the 5S RNA into the large ribosomal subunit, where it forms part of the central protuberance. The chain is Large ribosomal subunit protein uL18 from Burkholderia multivorans (strain ATCC 17616 / 249).